Consider the following 317-residue polypeptide: Melanocyte-stimulating hormone receptor (317 aa).

Topologically, residues 1-37 (MPVQGSQRRLLGSLNSTPTATPHLGLAANQTGARCLE) are extracellular. N-linked (GlcNAc...) asparagine glycosylation is present at N29. A helical transmembrane segment spans residues 38-63 (VSVPDGLFLSLGLVSLVENVLVVTAI). Residues 64-72 (AKNRNLHSP) are Cytoplasmic-facing. Residues 73-93 (MYCFICCLALSDLLVSGSNML) form a helical membrane-spanning segment. The Extracellular segment spans residues 94-118 (ETAVTLLLEAGALAARAAVVQQLDN). Residues 119-140 (VIDVITCSSMLSSLCFLGAIAV) traverse the membrane as a helical segment. Residues 141–163 (DRYISIFYALRYHSIVTLPRARR) are Cytoplasmic-facing. The helical transmembrane segment at 164–183 (AVAAIWVASVLCSTLFIAYY) threads the bilayer. Over 184–191 (DHAAVLLC) the chain is Extracellular. The helical transmembrane segment at 192 to 211 (LVVFFLAMLVLMAVLYVHML) threads the bilayer. Topologically, residues 212-240 (ARACQHAQGIARLHKRQRLAHQGFGLKGA) are cytoplasmic. The chain crosses the membrane as a helical span at residues 241–266 (ATLTILLGIFFLCWGPFFLHLTLIVL). At 267 to 279 (CPQHPTCSCIFKN) the chain is on the extracellular side. The chain crosses the membrane as a helical span at residues 280–300 (FNLFLALIICNAIIDPLIYAF). The Cytoplasmic portion of the chain corresponds to 301–317 (RSQELRRTLKEVLLCSW). C315 carries the S-palmitoyl cysteine lipid modification.

The protein belongs to the G-protein coupled receptor 1 family. In terms of assembly, interacts with MGRN1, but does not undergo MGRN1-mediated ubiquitination; this interaction competes with GNAS-binding and thus inhibits agonist-induced cAMP production. Interacts with OPN3; the interaction results in a decrease in MC1R-mediated cAMP signaling and ultimately a decrease in melanin production in melanocytes.

The protein resides in the cell membrane. Receptor for MSH (alpha, beta and gamma) and ACTH. The activity of this receptor is mediated by G proteins which activate adenylate cyclase. Mediates melanogenesis, the production of eumelanin (black/brown) and phaeomelanin (red/yellow), via regulation of cAMP signaling in melanocytes. The protein is Melanocyte-stimulating hormone receptor (MC1R) of Macaca sylvanus (Barbary macaque).